The chain runs to 653 residues: Transmembrane and coiled-coil domains protein 1 (653 aa).

At Met1 the chain carries N-acetylmethionine. 4 disordered regions span residues Met1–Ser35, His58–Glu78, Pro112–Ser165, and Thr204–Pro227. Residues Met1–Asn591 are Cytoplasmic-facing. Residues Gln20–Leu34 are compositionally biased toward basic and acidic residues. Over residues Ser64–Gln74 the composition is skewed to polar residues. A compositionally biased stretch (basic residues) spans Pro113–Arg125. A compositionally biased stretch (polar residues) spans Pro135–Glu144. Positions Arg153–Ser165 are enriched in low complexity. Positions Thr204–Thr218 are enriched in polar residues. Positions Gln228–Gly313 form a coiled coil. A phosphoserine mark is found at Ser382 and Ser414. The disordered stretch occupies residues Pro415–Thr437. The span at Ser424–Thr437 shows a compositional bias: polar residues. Residues Gly458–Gly576 are a coiled coil. A run of 2 helical transmembrane segments spans residues Ile592 to Val612 and Leu625 to Val645. The Cytoplasmic segment spans residues Glu646–Arg653.

This sequence belongs to the TEX28 family. May form homodimers and heterodimers with TMCC2 or TMCC3 via the coiled-coil domains. Interacts with ribosomal proteins RPL4 and RPS6.

It localises to the endoplasmic reticulum membrane. Its function is as follows. Endoplasmic reticulum membrane protein that promotes endoplasmic reticulum-associated endosome fission. Localizes to contact sites between the endoplasmic reticulum and endosomes and acts by promoting recruitment of the endoplasmic reticulum to endosome tubules for fission. Endosome membrane fission of early and late endosomes is essential to separate regions destined for lysosomal degradation from carriers to be recycled to the plasma membrane. The protein is Transmembrane and coiled-coil domains protein 1 of Homo sapiens (Human).